Consider the following 75-residue polypeptide: Small ribosomal subunit protein bS16 (75 aa).

It belongs to the bacterial ribosomal protein bS16 family.

This is Small ribosomal subunit protein bS16 from Helicobacter pylori (strain G27).